The following is a 613-amino-acid chain: MWIIEAEGDILKGKSRILFPGTYIVGRNVSDDSSHIQVISKSISKRHARFTILTPSEKDYFTGGPCEFEVKDLDTKFGTKVNEKVVGQNGDSYKEKDLKIQLGKCPFTINAYWRSMCIQFDNPEMLSQWASNLNLLGIPTGLRDSDATTHFVMNRQAGSSITVGTMYAFLKKTVIIDDSYLQYLSTVKESVIEDASLMPDALECFKNIIKNNDQFPSSPEDCINSLEGFSCAMLNTSSESHHLLELLGLRISTFMSLGDIDKELISKTDFVVLNNAVYDSEKISFPEGIFCLTIEQLWKIIIERNSRELISKEIERLKYATASNSTPQKIIQPQRHIQKNIVDDLFSVKKPLPCSPKSKRVKTLENLSIMDFVQPKQMFGKEPEGYLSNQSNNGSAQNKKSGDNSEKTKNSLKSSSKKSANTGSGQGKTKVEYVSYNSVDKGNSSPFKPLELNVVGEKKANAEVDSLPSENVQESEDDKAFEENRRLRNLGSVEYIRIMSSEKSNANSRHTSKYYSGRKNFKKFQKKASQKAPLQAFLSLSEHKKTEVFDQDDTDLEPVPRLMSKVESIPAGASSDKSGKSSISKKSSNSFKELSPKTNNDEDDEFNDLKFHF.

The 64-residue stretch at 23–86 folds into the FHA domain; the sequence is YIVGRNVSDD…FGTKVNEKVV (64 aa). BRCT domains are found at residues 107-186 and 228-302; these read FTIN…YLST and GFSC…KIII. A Phosphoserine modification is found at S355. 2 disordered regions span residues 381–428 and 546–613; these read KEPE…GQGK and TEVF…KFHF. Over residues 387–399 the composition is skewed to polar residues; the sequence is LSNQSNNGSAQNK. The span at 400-409 shows a compositional bias: basic and acidic residues; it reads KSGDNSEKTK. A compositionally biased stretch (low complexity) spans 574-592; it reads SSDKSGKSSISKKSSNSFK. Positions 611–613 match the FxF/Y motif motif; the sequence is FHF.

This sequence belongs to the Nibrin family. In terms of assembly, component of the MRN complex composed of two heterodimers rad32 and rad50 associated with a single nbs1. Interacts with (phosphorylated) ctp1/CtIP. Interacts (via FxF/Y motif) with tel1/atm.

It localises to the nucleus. Its subcellular location is the chromosome. It is found in the telomere. Component of the MRN complex, which plays a central role in double-strand break (DSB) repair, DNA recombination, maintenance of telomere integrity and meiosis. The MRN complex is involved in the repair of DNA double-strand breaks (DSBs) via homologous recombination (HR), an error-free mechanism which primarily occurs during S and G2 phases. The complex (1) mediates the end resection of damaged DNA, which generates proper single-stranded DNA, a key initial steps in HR, and is (2) required for the recruitment of other repair factors and efficient activation of tel1/atm upon DNA damage. The MRN complex possesses single-strand endonuclease activity and double-strand-specific 3'-5' exonuclease activity, which are provided by MRE11, to initiate end resection, which is required for single-strand invasion and recombination. Within the MRN complex, nbs1 acts as a protein-protein adapter, which specifically recognizes and binds phosphorylated proteins, promoting their recruitment to DNA damage sites. Recruits rad32 and rad50 components of the MRN complex to DSBs in response to DNA damage. Promotes the recruitment of tel1/atm to the DNA damage sites, activating tel1/atm function. Mediates the recruitment of phosphorylated ctp1/CtIP to DSBs, leading to cooperation between the MRN complex and ctp1/CtIP to initiate end resection. The protein is DNA repair and telomere maintenance protein nbs1 of Schizosaccharomyces pombe (strain 972 / ATCC 24843) (Fission yeast).